Reading from the N-terminus, the 147-residue chain is Large ribosomal subunit protein uL15 (147 aa).

A compositionally biased stretch (basic residues) spans 1 to 15 (MTDRVKKTRKLRGHV). The tract at residues 1-34 (MTDRVKKTRKLRGHVSHGYGRVGKHRKHSGGRGL) is disordered.

This sequence belongs to the universal ribosomal protein uL15 family.

The chain is Large ribosomal subunit protein uL15 (RPL27A) from Encephalitozoon cuniculi (strain GB-M1) (Microsporidian parasite).